The sequence spans 616 residues: Dihydroxy-acid dehydratase (616 aa).

Aspartate 81 contributes to the Mg(2+) binding site. Residue cysteine 122 participates in [2Fe-2S] cluster binding. Mg(2+) contacts are provided by aspartate 123 and lysine 124. Lysine 124 carries the N6-carboxylysine modification. Cysteine 195 is a binding site for [2Fe-2S] cluster. Position 491 (glutamate 491) interacts with Mg(2+). The Proton acceptor role is filled by serine 517.

The protein belongs to the IlvD/Edd family. In terms of assembly, homodimer. It depends on [2Fe-2S] cluster as a cofactor. Requires Mg(2+) as cofactor.

The enzyme catalyses (2R)-2,3-dihydroxy-3-methylbutanoate = 3-methyl-2-oxobutanoate + H2O. The catalysed reaction is (2R,3R)-2,3-dihydroxy-3-methylpentanoate = (S)-3-methyl-2-oxopentanoate + H2O. Its pathway is amino-acid biosynthesis; L-isoleucine biosynthesis; L-isoleucine from 2-oxobutanoate: step 3/4. It functions in the pathway amino-acid biosynthesis; L-valine biosynthesis; L-valine from pyruvate: step 3/4. Its function is as follows. Functions in the biosynthesis of branched-chain amino acids. Catalyzes the dehydration of (2R,3R)-2,3-dihydroxy-3-methylpentanoate (2,3-dihydroxy-3-methylvalerate) into 2-oxo-3-methylpentanoate (2-oxo-3-methylvalerate) and of (2R)-2,3-dihydroxy-3-methylbutanoate (2,3-dihydroxyisovalerate) into 2-oxo-3-methylbutanoate (2-oxoisovalerate), the penultimate precursor to L-isoleucine and L-valine, respectively. The polypeptide is Dihydroxy-acid dehydratase (Methylobacillus flagellatus (strain ATCC 51484 / DSM 6875 / VKM B-1610 / KT)).